Here is a 314-residue protein sequence, read N- to C-terminus: Epithelial-stromal interaction protein 1 (314 aa).

Disordered stretches follow at residues 1–72 (MYTR…PNES), 227–272 (WAGS…RAQI), and 289–314 (QGKS…SWGL). A compositionally biased stretch (basic and acidic residues) spans 18–30 (SRDHAGAGQRREL). Serine 39 is subject to Phosphoserine. The stretch at 71-180 (ESRRQKIQRI…QEDIRRATFR (110 aa)) forms a coiled coil. Basic and acidic residues predominate over residues 232 to 272 (AHRDSPQKEDNPRLQKTRDGHQKNKLLETKGQHQEEERAQI). Residues 305-314 (NMNSTDSWGL) are compositionally biased toward polar residues.

Expressed in the spleen, with expression in T cells, B cells, natural killer cells and natural killer T cells and high expression in monocytes and macrophages.

Functionally, plays a role in M1 macrophage polarization and is required for the proper regulation of gene expression during M1 versus M2 macrophage differentiation. Might play a role in RELA/p65 and STAT1 phosphorylation and nuclear localization upon activation of macrophages. The chain is Epithelial-stromal interaction protein 1 (Epsti1) from Mus musculus (Mouse).